Reading from the N-terminus, the 430-residue chain is Putative cytochrome P450 139 (430 aa).

Cysteine 372 is a heme binding site.

This sequence belongs to the cytochrome P450 family. The cofactor is heme.

The polypeptide is Putative cytochrome P450 139 (cyp139) (Mycobacterium bovis (strain ATCC BAA-935 / AF2122/97)).